We begin with the raw amino-acid sequence, 74 residues long: Large ribosomal subunit protein bL31 (74 aa).

Belongs to the bacterial ribosomal protein bL31 family. Type A subfamily. As to quaternary structure, part of the 50S ribosomal subunit.

Its function is as follows. Binds the 23S rRNA. In Chlorobaculum parvum (strain DSM 263 / NCIMB 8327) (Chlorobium vibrioforme subsp. thiosulfatophilum), this protein is Large ribosomal subunit protein bL31.